The sequence spans 323 residues: o-succinylbenzoate synthase (323 aa).

Lysine 134 serves as the catalytic Proton donor. Mg(2+) contacts are provided by aspartate 162, glutamate 191, and aspartate 214. Lysine 236 (proton acceptor) is an active-site residue.

It belongs to the mandelate racemase/muconate lactonizing enzyme family. MenC type 1 subfamily. A divalent metal cation is required as a cofactor.

It catalyses the reaction (1R,6R)-6-hydroxy-2-succinyl-cyclohexa-2,4-diene-1-carboxylate = 2-succinylbenzoate + H2O. The protein operates within quinol/quinone metabolism; 1,4-dihydroxy-2-naphthoate biosynthesis; 1,4-dihydroxy-2-naphthoate from chorismate: step 4/7. Its pathway is quinol/quinone metabolism; menaquinone biosynthesis. Converts 2-succinyl-6-hydroxy-2,4-cyclohexadiene-1-carboxylate (SHCHC) to 2-succinylbenzoate (OSB). This chain is o-succinylbenzoate synthase, found in Pectobacterium atrosepticum (strain SCRI 1043 / ATCC BAA-672) (Erwinia carotovora subsp. atroseptica).